The following is a 332-amino-acid chain: 2,3-diketo-L-gulonate reductase (332 aa).

H44 functions as the Proton donor in the catalytic mechanism. NAD(+) is bound by residues 168–174, 224–225, and 304–306; these read ITMVDMS, WK, and GHE.

The protein belongs to the LDH2/MDH2 oxidoreductase family. DlgD subfamily. As to quaternary structure, homodimer.

Its subcellular location is the cytoplasm. It carries out the reaction 3-dehydro-L-gulonate + NAD(+) = 2,3-dioxo-L-gulonate + NADH + H(+). The catalysed reaction is 3-dehydro-L-gulonate + NADP(+) = 2,3-dioxo-L-gulonate + NADPH + H(+). Catalyzes the reduction of 2,3-diketo-L-gulonate in the presence of NADH, to form 3-keto-L-gulonate. This chain is 2,3-diketo-L-gulonate reductase, found in Escherichia coli (strain SMS-3-5 / SECEC).